Reading from the N-terminus, the 522-residue chain is Nitrogen fixation protein VnfA (522 aa).

The interval 22–183 (LLYEMSQIAT…AQAVELYLVE (162 aa)) is a domain. The 143-residue stretch at 35-177 (DLSSIISILL…ILATTTAQAV (143 aa)) folds into the GAF domain. Residues 210–439 (IIGNSKPMLE…LENVIERAML (230 aa)) enclose the Sigma-54 factor interaction domain. ATP contacts are provided by residues 238-245 (GESGVGKE) and 301-310 (AAGGTIFLDE). The H-T-H motif DNA-binding region spans 493–512 (MTEAATHLGLTARVLGLRMG).

Its function is as follows. Required for the expression of the V-dependent nitrogen fixation system in Azotobacter vinelandii. It is required for the regulation of nitrogenase 2 transcription. Interacts with sigma-54. The chain is Nitrogen fixation protein VnfA (vnfA) from Azotobacter vinelandii.